The primary structure comprises 178 residues: Ribosome maturation factor RimM (178 aa).

Residues 100 to 178 form the PRC barrel domain; sequence TDGEYYWYQL…EMKVEWDADF (79 aa).

The protein belongs to the RimM family. As to quaternary structure, binds ribosomal protein uS19.

The protein resides in the cytoplasm. Functionally, an accessory protein needed during the final step in the assembly of 30S ribosomal subunit, possibly for assembly of the head region. Essential for efficient processing of 16S rRNA. May be needed both before and after RbfA during the maturation of 16S rRNA. It has affinity for free ribosomal 30S subunits but not for 70S ribosomes. The protein is Ribosome maturation factor RimM of Pseudomonas fluorescens (strain SBW25).